We begin with the raw amino-acid sequence, 348 residues long: Phosphate acyltransferase (348 aa).

It belongs to the PlsX family. Homodimer. Probably interacts with PlsY.

The protein localises to the cytoplasm. It carries out the reaction a fatty acyl-[ACP] + phosphate = an acyl phosphate + holo-[ACP]. The protein operates within lipid metabolism; phospholipid metabolism. Catalyzes the reversible formation of acyl-phosphate (acyl-PO(4)) from acyl-[acyl-carrier-protein] (acyl-ACP). This enzyme utilizes acyl-ACP as fatty acyl donor, but not acyl-CoA. The protein is Phosphate acyltransferase of Leuconostoc citreum (strain KM20).